The primary structure comprises 448 residues: Solute carrier family 52, riboflavin transporter, member 2 (448 aa).

Transmembrane regions (helical) follow at residues 14 to 34 (LLVA…WVEL), 47 to 67 (LPSY…VVTL), 79 to 99 (VPIQ…APLW), 105 to 125 (VAGQ…ALAC), and 147 to 167 (FFLG…VQGV). A glycan (N-linked (GlcNAc...) asparagine) is linked at Asn178. Residues 198 to 218 (WALTALLVTSAAAFQGLLLLL) form a helical membrane-spanning segment. The tract at residues 228–267 (GAGPELPLGSPGAEEEEKEEEEALPLQEPPSQAAGTIPGP) is disordered. A compositionally biased stretch (acidic residues) spans 240–250 (AEEEEKEEEEA). Transmembrane regions (helical) follow at residues 280-300 (AFLL…LPAV), 315-335 (LAVV…MGVL), 342-362 (LVGL…LAIL), 369-389 (VGTT…LCVF), and 407-427 (ALLA…GTMF).

The protein belongs to the riboflavin transporter family.

The protein localises to the cell membrane. The enzyme catalyses riboflavin(in) = riboflavin(out). Riboflavin transport is Na(+)-independent but moderately pH-sensitive. Activity is strongly inhibited by riboflavin analogs, such as lumiflavin. Weakly inhibited by flavin adenine dinucleotide (FAD) and flavin mononucleotide (FMN). Functionally, plasma membrane transporter mediating the uptake by cells of the water soluble vitamin B2/riboflavin that plays a key role in biochemical oxidation-reduction reactions of the carbohydrate, lipid, and amino acid metabolism. May also act as a receptor for 4-hydroxybutyrate. In terms of biological role, (Microbial infection) In case of infection by retroviruses, acts as a cell receptor to retroviral envelopes similar to the porcine endogenous retrovirus (PERV-A). The protein is Solute carrier family 52, riboflavin transporter, member 2 (SLC52A2) of Papio hamadryas (Hamadryas baboon).